The chain runs to 100 residues: NADH-quinone oxidoreductase subunit K (100 aa).

The next 3 helical transmembrane spans lie at 4-24 (LTHG…GLVI), 28-48 (LLFM…AFVV), and 60-80 (VMYI…LALL).

The protein belongs to the complex I subunit 4L family. NDH-1 is composed of 13 different subunits. Subunits NuoA, H, J, K, L, M, N constitute the membrane sector of the complex.

It is found in the cell inner membrane. It catalyses the reaction a quinone + NADH + 5 H(+)(in) = a quinol + NAD(+) + 4 H(+)(out). NDH-1 shuttles electrons from NADH, via FMN and iron-sulfur (Fe-S) centers, to quinones in the respiratory chain. The immediate electron acceptor for the enzyme in this species is believed to be ubiquinone. Couples the redox reaction to proton translocation (for every two electrons transferred, four hydrogen ions are translocated across the cytoplasmic membrane), and thus conserves the redox energy in a proton gradient. This is NADH-quinone oxidoreductase subunit K from Salmonella agona (strain SL483).